Consider the following 192-residue polypeptide: MLAPALNLPKWLEENSHLLQPPINNYCVYHPSAPATQGYTVMVVGGPNVRTDYHINPTPEFFYQHRGSMLLRTVDQSTSPPTFQDIPIHEGSLFLLPANTPHCPVRFADTVGVVLEVPRPENATDCMRWYCKGCGEIVWEKKFHCTDLGTQVKEVVEEFAADDEKRKCKACGSVRSVRYEDGEVVQPPRAPE.

Arg50 contacts O2. Positions 54, 60, and 102 each coordinate Fe cation. Glu60 is a binding site for substrate. The substrate site is built by Arg106 and Glu116. Residues Cys131, Cys134, Cys168, and Cys171 each contribute to the a divalent metal cation site.

The protein belongs to the 3-HAO family. Fe(2+) serves as cofactor.

The protein localises to the cytoplasm. It carries out the reaction 3-hydroxyanthranilate + O2 = (2Z,4Z)-2-amino-3-carboxymuconate 6-semialdehyde. It participates in cofactor biosynthesis; NAD(+) biosynthesis; quinolinate from L-kynurenine: step 3/3. Its function is as follows. Catalyzes the oxidative ring opening of 3-hydroxyanthranilate to 2-amino-3-carboxymuconate semialdehyde, which spontaneously cyclizes to quinolinate. This chain is 3-hydroxyanthranilate 3,4-dioxygenase, found in Coccidioides immitis (strain RS) (Valley fever fungus).